A 247-amino-acid polypeptide reads, in one-letter code: MSKLFWATLSFISRLPVPSRWAQGLDFEQYSRGIVMFPLIGAILGGLSGLIFILLQPWCGIPLAALFCILALALLTGGFHLDGLADTCDGIFSARRRERMLEIMRDSRLGTHGGLALIFVLLAKILVVSELALRGTPVLAALAAACAAGRGSAALLMYRHRYAREEGLGNVFIGKVSGRQTCVTLGLAAIITTVLLPGMQGLAAIVITLAAIFILGQLLKRTLGGQTGDTLGAAIELGELIFLLALL.

5 consecutive transmembrane segments (helical) span residues 34–54, 59–79, 113–133, 138–158, and 194–214; these read IVMFPLIGAILGGLSGLIFIL, CGIPLAALFCILALALLTGGF, GGLALIFVLLAKILVVSELAL, VLAALAAACAAGRGSAALLMY, and VLLPGMQGLAAIVITLAAIFI.

It belongs to the CobS family. Mg(2+) serves as cofactor.

The protein localises to the cell inner membrane. It catalyses the reaction alpha-ribazole + adenosylcob(III)inamide-GDP = adenosylcob(III)alamin + GMP + H(+). The enzyme catalyses alpha-ribazole 5'-phosphate + adenosylcob(III)inamide-GDP = adenosylcob(III)alamin 5'-phosphate + GMP + H(+). Its pathway is cofactor biosynthesis; adenosylcobalamin biosynthesis; adenosylcobalamin from cob(II)yrinate a,c-diamide: step 7/7. Functionally, joins adenosylcobinamide-GDP and alpha-ribazole to generate adenosylcobalamin (Ado-cobalamin). Also synthesizes adenosylcobalamin 5'-phosphate from adenosylcobinamide-GDP and alpha-ribazole 5'-phosphate. This is Adenosylcobinamide-GDP ribazoletransferase from Salmonella arizonae (strain ATCC BAA-731 / CDC346-86 / RSK2980).